A 636-amino-acid chain; its full sequence is Asparagine synthetase domain-containing protein 1 (636 aa).

The active-site Nucleophile is Cys2. A Glutamine amidotransferase type-2 domain is found at 2-187 (CGICCVVALS…ASGIFKMDLR (186 aa)). Positions 291–607 (QFIDVLDEAV…GLEAASILPK (317 aa)) constitute an Asparagine synthetase domain.

This chain is Asparagine synthetase domain-containing protein 1 (ASNSD1), found in Gallus gallus (Chicken).